We begin with the raw amino-acid sequence, 313 residues long: Olfactory receptor 4M2 (313 aa).

Over 1 to 25 (METANYTKVTEFVLTGLSQTPEVQL) the chain is Cytoplasmic. A helical transmembrane segment spans residues 26–46 (VLFVIFLSFYLFILPGNILII). Residues 47-57 (CTISLDPHLTS) lie on the Extracellular side of the membrane. A helical membrane pass occupies residues 58–78 (PMYFLLANLAFLDIWYSSITA). Over 79 to 97 (PEMLIDFFVERKIISFDEC) the chain is Cytoplasmic. Cys97 and Cys179 are oxidised to a cystine. The chain crosses the membrane as a helical span at residues 98 to 118 (IAQLFFLHFAGASEMFLLTVM). Residues 119-142 (AFDLYTAICRPLHYATIMNQRLCC) lie on the Extracellular side of the membrane. Residues 143-163 (ILVALSWRGGFIHSIIQVALI) traverse the membrane as a helical segment. Over 164–204 (VRLPFCGPNELDSYFCDITQVVRIACANTFPEELVMICSSG) the chain is Cytoplasmic. A helical transmembrane segment spans residues 205 to 225 (LISVVCLIALLMSYAFLLALL). The Extracellular segment spans residues 226–238 (KKLSGSGENTNRA). A helical membrane pass occupies residues 239 to 259 (VSTCYSHITIVVLMFGPSIYI). The Cytoplasmic portion of the chain corresponds to 260–270 (YARPFDSFSLD). The chain crosses the membrane as a helical span at residues 271-291 (KVVSVFNTLIFPLHNPIIYTL). Over 292-313 (RNKEVKAAMRKLVTKYILCKEK) the chain is Extracellular.

The protein belongs to the G-protein coupled receptor 1 family.

It localises to the membrane. In terms of biological role, odorant receptor. This chain is Olfactory receptor 4M2, found in Homo sapiens (Human).